The sequence spans 592 residues: Testis-specific serine kinase substrate (592 aa).

Residue Ser-217 is modified to Phosphoserine. Positions 232–308 (QDETPRRQEA…VPAGWGMGPR (77 aa)) are disordered. Residues 234–264 (ETPRRQEAELQEPEEKQEPEEKQEPEEKQKP) are compositionally biased toward basic and acidic residues. Positions 269-281 (SWNSLGPAATSQG) are enriched in polar residues. Ser-288 is subject to Phosphoserine; by TSSK1 and TSSK2. At Ser-316 the chain carries Phosphoserine. The disordered stretch occupies residues 566 to 592 (LEGSTGTMGGGSSAGTPPKQGGSAPEQ).

Post-translationally, phosphorylated on serine residue(s) by STK22A/TSSK1 and STK22B/TSSK2. Highly expressed in testis. Expressed at low levels in prostate, female breast, placenta, ovary and thymus.

It is found in the cytoplasm. Its subcellular location is the cytoskeleton. The protein resides in the microtubule organizing center. It localises to the centrosome. The protein localises to the centriole. May play a role in testicular physiology, most probably in the process of spermatogenesis or spermatid development. The sequence is that of Testis-specific serine kinase substrate (TSKS) from Homo sapiens (Human).